Consider the following 89-residue polypeptide: Acylphosphatase (89 aa).

One can recognise an Acylphosphatase-like domain in the interval arginine 3–arginine 89. Catalysis depends on residues arginine 18 and asparagine 36.

This sequence belongs to the acylphosphatase family.

The catalysed reaction is an acyl phosphate + H2O = a carboxylate + phosphate + H(+). The sequence is that of Acylphosphatase (acyP) from Rhodococcus jostii (strain RHA1).